The following is a 347-amino-acid chain: GMP reductase (347 aa).

108–131 is an NADP(+) binding site; that stretch reads ADFEKTKQILDLNPALNFVCIDVA. Positions 181 and 183 each coordinate K(+). Cys186 acts as the Thioimidate intermediate in catalysis. Residue 216–239 coordinates NADP(+); that stretch reads IVSDGGCTTPGDVAKAFGGGADFV.

This sequence belongs to the IMPDH/GMPR family. GuaC type 1 subfamily. Homotetramer.

The catalysed reaction is IMP + NH4(+) + NADP(+) = GMP + NADPH + 2 H(+). Functionally, catalyzes the irreversible NADPH-dependent deamination of GMP to IMP. It functions in the conversion of nucleobase, nucleoside and nucleotide derivatives of G to A nucleotides, and in maintaining the intracellular balance of A and G nucleotides. The protein is GMP reductase of Shigella boydii serotype 4 (strain Sb227).